Reading from the N-terminus, the 199-residue chain is Charged multivesicular body protein 1b (199 aa).

2 coiled-coil regions span residues Asn-10–Lys-30 and Thr-178–Val-199. A disordered region spans residues Glu-167–Val-199. Residues Gln-170 to Ser-182 show a composition bias toward polar residues. The MIT-interacting motif motif lies at Asp-186–Arg-196.

This sequence belongs to the SNF7 family. Probable peripherally associated component of the endosomal sorting required for transport complex III (ESCRT-III).

It is found in the cytoplasm. The protein localises to the cytosol. Its subcellular location is the endosome. It localises to the late endosome membrane. Probable peripherally associated component of the endosomal sorting required for transport complex III (ESCRT-III) which is involved in multivesicular bodies (MVBs) formation and sorting of endosomal cargo proteins into MVBs. MVBs contain intraluminal vesicles (ILVs) that are generated by invagination and scission from the limiting membrane of the endosome and mostly are delivered to lysosomes enabling degradation of membrane proteins, such as stimulated growth factor receptors, lysosomal enzymes and lipids. This is Charged multivesicular body protein 1b (chmp1b) from Danio rerio (Zebrafish).